A 576-amino-acid polypeptide reads, in one-letter code: Aspartate--tRNA ligase (576 aa).

E171 provides a ligand contact to L-aspartate. Residues 195-198 form an aspartate region; it reads QLFK. L-aspartate is bound at residue R217. ATP-binding positions include 217–219 and Q226; that span reads RDE. H450 is an L-aspartate binding site. An ATP-binding site is contributed by E484. L-aspartate is bound at residue R491. 536–539 contacts ATP; sequence GLDR.

Belongs to the class-II aminoacyl-tRNA synthetase family. Type 1 subfamily. As to quaternary structure, homodimer.

Its subcellular location is the cytoplasm. It carries out the reaction tRNA(Asp) + L-aspartate + ATP = L-aspartyl-tRNA(Asp) + AMP + diphosphate. Functionally, catalyzes the attachment of L-aspartate to tRNA(Asp) in a two-step reaction: L-aspartate is first activated by ATP to form Asp-AMP and then transferred to the acceptor end of tRNA(Asp). The chain is Aspartate--tRNA ligase from Buchnera aphidicola subsp. Baizongia pistaciae (strain Bp).